The sequence spans 144 residues: Transcriptional regulator MraZ (144 aa).

SpoVT-AbrB domains follow at residues 5–47 (EYQY…PLDR) and 76–121 (AHKT…SQER).

The protein belongs to the MraZ family. As to quaternary structure, forms oligomers.

It localises to the cytoplasm. It is found in the nucleoid. In Thermus thermophilus (strain ATCC BAA-163 / DSM 7039 / HB27), this protein is Transcriptional regulator MraZ.